The primary structure comprises 360 residues: Aminomethyltransferase (360 aa).

Belongs to the GcvT family. The glycine cleavage system is composed of four proteins: P, T, L and H.

The catalysed reaction is N(6)-[(R)-S(8)-aminomethyldihydrolipoyl]-L-lysyl-[protein] + (6S)-5,6,7,8-tetrahydrofolate = N(6)-[(R)-dihydrolipoyl]-L-lysyl-[protein] + (6R)-5,10-methylene-5,6,7,8-tetrahydrofolate + NH4(+). Its function is as follows. The glycine cleavage system catalyzes the degradation of glycine. The sequence is that of Aminomethyltransferase from Pseudomonas putida (strain ATCC 47054 / DSM 6125 / CFBP 8728 / NCIMB 11950 / KT2440).